The primary structure comprises 498 residues: MISMKYRDLRDFLSLLEQRGELKRISQPIDPYLEMTEIADRTLRAGGPALLFENPKGYSMPVLCNLFGTAKRVAMGMGQEDVSALRDVGKLLAFLKEPDPPKGFRDLFDKLPKFKQVLNMPTKRLNSAPCQEQVWQGEDVDLSRIPVMHCWPEDAAPLVSWGLTITRGPHKERQNLGIYRQQVLGKNKLIMRWLSHRGGALDYQEWCEAHPGERFPVAVALGADPATILAAVTPVPDTLSEYAFAGLLRGHKTEVVKCLSNDLEVPASAEIVLEGYIEQGDMAPEGPYGDHTGYYNEIDNFPVFTVTHITQRQDAIYHSTYTGRPPDEPAVMGVALNEVFVPILQKQFPEIVDFYLPPEGCSYRLAVVTIKKQYAGHAKRVMMGVWSFLRQFMYTKFVIVCDDDINARDWNDVIWAITTRMDPSRDTVLIENTPIDYLDFASPVSGLGSKMGLDATNKWPAETPREWGRPIKMDEDVRARIDALWDELAIFSDKDAKR.

Residue N175 coordinates Mn(2+). Prenylated FMN-binding positions include 178 to 180, 192 to 194, and 197 to 198; these read IYR, RWL, and RG. A Mn(2+)-binding site is contributed by E241. Catalysis depends on D290, which acts as the Proton donor.

It belongs to the UbiD family. As to quaternary structure, homohexamer. Prenylated FMN serves as cofactor. Requires Mn(2+) as cofactor.

It localises to the cell membrane. It carries out the reaction a 4-hydroxy-3-(all-trans-polyprenyl)benzoate + H(+) = a 2-(all-trans-polyprenyl)phenol + CO2. It functions in the pathway cofactor biosynthesis; ubiquinone biosynthesis. Catalyzes the decarboxylation of 3-octaprenyl-4-hydroxy benzoate to 2-octaprenylphenol, an intermediate step in ubiquinone biosynthesis. The protein is 3-octaprenyl-4-hydroxybenzoate carboxy-lyase of Yersinia pseudotuberculosis serotype I (strain IP32953).